The following is a 245-amino-acid chain: 1-(5-phosphoribosyl)-5-[(5-phosphoribosylamino)methylideneamino] imidazole-4-carboxamide isomerase (245 aa).

Residue Asp7 is the Proton acceptor of the active site. Residue Asp129 is the Proton donor of the active site.

It belongs to the HisA/HisF family.

The protein resides in the cytoplasm. It carries out the reaction 1-(5-phospho-beta-D-ribosyl)-5-[(5-phospho-beta-D-ribosylamino)methylideneamino]imidazole-4-carboxamide = 5-[(5-phospho-1-deoxy-D-ribulos-1-ylimino)methylamino]-1-(5-phospho-beta-D-ribosyl)imidazole-4-carboxamide. Its pathway is amino-acid biosynthesis; L-histidine biosynthesis; L-histidine from 5-phospho-alpha-D-ribose 1-diphosphate: step 4/9. The protein is 1-(5-phosphoribosyl)-5-[(5-phosphoribosylamino)methylideneamino] imidazole-4-carboxamide isomerase of Klebsiella pneumoniae subsp. pneumoniae (strain ATCC 700721 / MGH 78578).